A 467-amino-acid chain; its full sequence is ATP-dependent protease ATPase subunit HslU (467 aa).

ATP contacts are provided by residues V20, 62 to 67, D280, E345, and R417; that span reads GVGKTE.

It belongs to the ClpX chaperone family. HslU subfamily. In terms of assembly, a double ring-shaped homohexamer of HslV is capped on each side by a ring-shaped HslU homohexamer. The assembly of the HslU/HslV complex is dependent on binding of ATP.

It is found in the cytoplasm. In terms of biological role, ATPase subunit of a proteasome-like degradation complex; this subunit has chaperone activity. The binding of ATP and its subsequent hydrolysis by HslU are essential for unfolding of protein substrates subsequently hydrolyzed by HslV. HslU recognizes the N-terminal part of its protein substrates and unfolds these before they are guided to HslV for hydrolysis. This chain is ATP-dependent protease ATPase subunit HslU, found in Enterococcus faecalis (strain ATCC 700802 / V583).